Consider the following 478-residue polypeptide: WD repeat-containing protein AAC3 (478 aa).

2 disordered regions span residues 33–53 and 106–140; these read HPLF…QQQQ and SQIH…QYTN. Residues 106 to 125 show a composition bias toward low complexity; that stretch reads SQIHQQSQQSQLSNNLNSNS. Residues 126-140 show a composition bias toward polar residues; sequence KESTNIPKTNTQYTN. 7 WD repeats span residues 163–202, 226–268, 270–307, 310–349, 357–396, 399–438, and 440–478; these read GNKK…NSNN, GHDG…GTVS, NSEN…TLKI, FNGE…TTHV, GHTA…CVKT, KSTF…PIHT, and ECSG…GYHS.

The protein belongs to the THOC3 family.

This chain is WD repeat-containing protein AAC3 (AAC3), found in Dictyostelium discoideum (Social amoeba).